The sequence spans 106 residues: Probable insulin-like peptide beta-type 1 (106 aa).

An N-terminal signal peptide occupies residues 1-19; sequence MFSFFTYFLLSALLLSASC. A propeptide spans 20-51 (removed; by convertase egl-3); the sequence is RQPSMDTSKADRILREIEMETELENQLSRARR. Intrachain disulfides connect cysteine 60–cysteine 89, cysteine 72–cysteine 102, cysteine 76–cysteine 103, and cysteine 88–cysteine 93.

Belongs to the insulin family. As to expression, expressed by ASI and ASJ sensory neurons and weakly by ventral cord motor neurons.

It is found in the secreted. Functionally, probable insulin-like peptide which negatively regulates synapse development at the neuromuscular junctions. Probably acts as a daf-2/InsR agonist ligand to prevent dauer formation under optimal environmental conditions. This is Probable insulin-like peptide beta-type 1 (ins-4) from Caenorhabditis elegans.